Reading from the N-terminus, the 376-residue chain is MKTELNLFDRQLTLFRYPNNANETLQAWDAGDEYLINYVEELALDTPQNILILNDHFGALSCWFSAQHQVTMMSDSFISQQGAKENLQRNQCREVKLLTTLDAIPTETSLVLFQLPKNNRHLTWQLTQLRKTLSPDVPVVAVNKAKEIHTSTLKLFEKYLGTTKTSLAWKKHRLVFCQADCAQMNDISPVTRWNVEEHKMTLNNLPNVYSGESLDLGARFMLEHIPQDDNLKHIIDLGCGNGVLSVKAAQLNPKAKFTLVDESYMAIESARLNLQENVTASVDAEYIANNCLDGFAGEIADLILCNPPFHQQQAITDHIAWQMFCDAKRVLKRGGKLQVIGNRHLGYDGKLKRLYGDKNVKLVASNSKFVILQATK.

This sequence belongs to the methyltransferase superfamily. RlmG family.

The protein localises to the cytoplasm. The catalysed reaction is guanosine(1835) in 23S rRNA + S-adenosyl-L-methionine = N(2)-methylguanosine(1835) in 23S rRNA + S-adenosyl-L-homocysteine + H(+). Its function is as follows. Specifically methylates the guanine in position 1835 (m2G1835) of 23S rRNA. This is Ribosomal RNA large subunit methyltransferase G from Vibrio vulnificus (strain CMCP6).